Consider the following 77-residue polypeptide: DNA-directed RNA polymerase subunit epsilon (77 aa).

The protein belongs to the RNA polymerase subunit epsilon family. As to quaternary structure, RNAP is composed of a core of 2 alpha, a beta and a beta' subunit. The core is associated with a delta subunit, and at least one of epsilon or omega. When a sigma factor is associated with the core the holoenzyme is formed, which can initiate transcription.

The catalysed reaction is RNA(n) + a ribonucleoside 5'-triphosphate = RNA(n+1) + diphosphate. A non-essential component of RNA polymerase (RNAP). The sequence is that of DNA-directed RNA polymerase subunit epsilon from Streptococcus pneumoniae (strain Hungary19A-6).